We begin with the raw amino-acid sequence, 428 residues long: Glutamate-1-semialdehyde 2,1-aminomutase (428 aa).

Position 267 is an N6-(pyridoxal phosphate)lysine (Lys-267).

The protein belongs to the class-III pyridoxal-phosphate-dependent aminotransferase family. HemL subfamily. In terms of assembly, homodimer. The cofactor is pyridoxal 5'-phosphate.

The protein localises to the cytoplasm. It catalyses the reaction (S)-4-amino-5-oxopentanoate = 5-aminolevulinate. The protein operates within porphyrin-containing compound metabolism; protoporphyrin-IX biosynthesis; 5-aminolevulinate from L-glutamyl-tRNA(Glu): step 2/2. The sequence is that of Glutamate-1-semialdehyde 2,1-aminomutase from Flavobacterium psychrophilum (strain ATCC 49511 / DSM 21280 / CIP 103535 / JIP02/86).